Reading from the N-terminus, the 746-residue chain is Ferrienterobactin receptor (746 aa).

A signal peptide spans 1–22; that stretch reads MNKKIHSLALLVNLGIYGVAQA. The TonB box motif lies at 34 to 41; it reads DTIVVTAA. Residues 42-169 enclose the TBDR plug domain; sequence EQNLQAPGVS…AGGVVNIITK (128 aa). Positions 76-96 are disordered; sequence GVNLTGNSTSGQRGNNRQIDI. Polar residues predominate over residues 79–93; it reads LTGNSTSGQRGNNRQ. In terms of domain architecture, TBDR beta-barrel spans 174 to 746; that stretch reads EWHGSWDAYF…TWYMSVNTHF (573 aa). The TonB C-terminal box signature appears at 729 to 746; sequence YTYNEPGRTWYMSVNTHF.

This sequence belongs to the TonB-dependent receptor family.

The protein localises to the cell outer membrane. Its function is as follows. This protein is involved in the initial step of iron uptake by binding ferrienterobactin (Fe-ENT), an iron chelatin siderophore that allows E.coli to extract iron from the environment. FepA also acts as a receptor for colicins B and D. In Escherichia coli (strain K12), this protein is Ferrienterobactin receptor (fepA).